A 30-amino-acid polypeptide reads, in one-letter code: Matrix Gla protein (30 aa).

S2, S3, and S5 each carry phosphoserine.

Belongs to the osteocalcin/matrix Gla protein family. Post-translationally, requires vitamin K-dependent gamma-carboxylation for its function.

Its subcellular location is the secreted. Functionally, associates with the organic matrix of calcified cartilage. This is Matrix Gla protein (mgp) from Prionace glauca (Blue shark).